The sequence spans 435 residues: Methanethiol oxidase (435 aa).

An N-terminal signal peptide occupies residues 1 to 24 (MKKHLLAGACALAMGFAVIPGTFA).

This sequence belongs to the selenium-binding protein family. As to quaternary structure, homotetramer. Requires Cu cation as cofactor.

The protein localises to the periplasm. It carries out the reaction methanethiol + O2 + H2O = hydrogen sulfide + formaldehyde + H2O2 + H(+). It functions in the pathway organosulfur degradation. Inhibited by EDTA but not by EGTA. Functionally, catalyzes the oxidation of methanethiol. Can also degrade ethanethiol, but not methanol, methylamine or dimethylsulfide. This Hyphomicrobium sp protein is Methanethiol oxidase.